We begin with the raw amino-acid sequence, 124 residues long: Small ribosomal subunit protein uS13 (124 aa).

The disordered stretch occupies residues 94–124 (KGLPVRGQRTKTNARTRKGPKRTVAGKKKAR).

Belongs to the universal ribosomal protein uS13 family. Part of the 30S ribosomal subunit. Forms a loose heterodimer with protein S19. Forms two bridges to the 50S subunit in the 70S ribosome.

In terms of biological role, located at the top of the head of the 30S subunit, it contacts several helices of the 16S rRNA. In the 70S ribosome it contacts the 23S rRNA (bridge B1a) and protein L5 of the 50S subunit (bridge B1b), connecting the 2 subunits; these bridges are implicated in subunit movement. Contacts the tRNAs in the A and P-sites. The chain is Small ribosomal subunit protein uS13 from Pseudarthrobacter chlorophenolicus (strain ATCC 700700 / DSM 12829 / CIP 107037 / JCM 12360 / KCTC 9906 / NCIMB 13794 / A6) (Arthrobacter chlorophenolicus).